We begin with the raw amino-acid sequence, 401 residues long: Acetate kinase (401 aa).

Asparagine 7 contacts Mg(2+). Lysine 14 serves as a coordination point for ATP. Arginine 96 is a substrate binding site. Catalysis depends on aspartate 153, which acts as the Proton donor/acceptor. ATP is bound by residues 212 to 216 (HLGNG), 287 to 289 (DMR), and 335 to 339 (GIGEN). Glutamate 388 is a Mg(2+) binding site.

The protein belongs to the acetokinase family. In terms of assembly, homodimer. Mg(2+) serves as cofactor. Requires Mn(2+) as cofactor.

The protein resides in the cytoplasm. The catalysed reaction is acetate + ATP = acetyl phosphate + ADP. It participates in metabolic intermediate biosynthesis; acetyl-CoA biosynthesis; acetyl-CoA from acetate: step 1/2. Its function is as follows. Catalyzes the formation of acetyl phosphate from acetate and ATP. Can also catalyze the reverse reaction. The sequence is that of Acetate kinase from Microcystis aeruginosa (strain NIES-843 / IAM M-2473).